The primary structure comprises 383 residues: BRISC and BRCA1-A complex member 2 (383 aa).

Met-1 carries the post-translational modification N-acetylmethionine. Ser-2 is subject to Phosphoserine. UEV-like regions lie at residues 30–147 (DATN…TLLE) and 275–364 (IAAF…RAKA).

This sequence belongs to the BABAM2 family. In terms of assembly, component of the ARISC complex, at least composed of UIMC1/RAP80, ABRAXAS1, BRCC3/BRCC36, BABAM2 and BABAM1/NBA1. Component of the BRCA1-A complex, at least composed of BRCA1, BARD1, UIMC1/RAP80, ABRAXAS1, BRCC3/BRCC36, BABAM2 and BABAM1/NBA1. In the BRCA1-A complex, interacts directly with ABRAXAS1, BRCC3/BRCC36 and BABAM1/NBA1. Binds polyubiquitin. Component of the BRISC complex, at least composed of ABRAXAS2, BRCC3/BRCC36, BABAM2 and BABAM1/NBA1. Identified in a complex with SHMT2 and the other subunits of the BRISC complex. Component of the BRCA1/BRCA2 containing complex (BRCC), which also contains BRCA1, BRCA2, BARD1, BRCC3/BRCC36 and RAD51. BRCC is a ubiquitin E3 ligase complex that enhances cellular survival following DNA damage. May interact with FAS and TNFRSF1A. Expressed in all cell lines examined. Highly expressed in placenta.

Its subcellular location is the cytoplasm. The protein localises to the nucleus. Functionally, component of the BRCA1-A complex, a complex that specifically recognizes 'Lys-63'-linked ubiquitinated histones H2A and H2AX at DNA lesions sites, leading to target the BRCA1-BARD1 heterodimer to sites of DNA damage at double-strand breaks (DSBs). The BRCA1-A complex also possesses deubiquitinase activity that specifically removes 'Lys-63'-linked ubiquitin on histones H2A and H2AX. In the BRCA1-A complex, it acts as an adapter that bridges the interaction between BABAM1/NBA1 and the rest of the complex, thereby being required for the complex integrity and modulating the E3 ubiquitin ligase activity of the BRCA1-BARD1 heterodimer. Component of the BRISC complex, a multiprotein complex that specifically cleaves 'Lys-63'-linked ubiquitin in various substrates. Within the BRISC complex, acts as an adapter that bridges the interaction between BABAM1/NBA1 and the rest of the complex, thereby being required for the complex integrity. The BRISC complex is required for normal mitotic spindle assembly and microtubule attachment to kinetochores via its role in deubiquitinating NUMA1. The BRISC complex plays a role in interferon signaling via its role in the deubiquitination of the interferon receptor IFNAR1; deubiquitination increases IFNAR1 activity by enhancing its stability and cell surface expression. Down-regulates the response to bacterial lipopolysaccharide (LPS) via its role in IFNAR1 deubiquitination. May play a role in homeostasis or cellular differentiation in cells of neural, epithelial and germline origins. May also act as a death receptor-associated anti-apoptotic protein, which inhibits the mitochondrial apoptotic pathway. May regulate TNF-alpha signaling through its interactions with TNFRSF1A; however these effects may be indirect. The protein is BRISC and BRCA1-A complex member 2 of Homo sapiens (Human).